Consider the following 126-residue polypeptide: Glycine cleavage system H protein (126 aa).

Residues 21–103 (TVTIGISEHA…YEGGWIVKVK (83 aa)) enclose the Lipoyl-binding domain. Lys62 is modified (N6-lipoyllysine).

Belongs to the GcvH family. In terms of assembly, the glycine cleavage system is composed of four proteins: P, T, L and H. Requires (R)-lipoate as cofactor.

In terms of biological role, the glycine cleavage system catalyzes the degradation of glycine. The H protein shuttles the methylamine group of glycine from the P protein to the T protein. The chain is Glycine cleavage system H protein from Vibrio atlanticus (strain LGP32) (Vibrio splendidus (strain Mel32)).